The chain runs to 842 residues: Taste receptor type 1 member 1 (842 aa).

The first 19 residues, 1–19 (MLFWAAHLLLSLQLAVAYC), serve as a signal peptide directing secretion. Residues 20–568 (WAFSCQRTES…EFLGWHEPIS (549 aa)) lie on the Extracellular side of the membrane. Residues asparagine 88, asparagine 89, asparagine 96, asparagine 136, asparagine 292, asparagine 480, and asparagine 530 are each glycosylated (N-linked (GlcNAc...) asparagine). Residues 569–589 (LVLLAANTLLLLLLIGTAGLF) form a helical membrane-spanning segment. The Cytoplasmic portion of the chain corresponds to 590-604 (AWRLHTPVVRSAGGR). A helical transmembrane segment spans residues 605–625 (LCFLMLGSLVAGSCSLYSFFG). The Extracellular portion of the chain corresponds to 626-640 (KPTVPACLLRQPLFS). Residues 641–661 (LGFAIFLSCLTIRSFQLVIIF) traverse the membrane as a helical segment. Residues 662-681 (KFSTKVPTFYHTWAQNHGAG) are Cytoplasmic-facing. Residues 682-702 (IFVIVSSTVHLFLCLTWLAMW) form a helical membrane-spanning segment. Residues 703–725 (TPRPTREYQRFPHLVILECTEVN) are Extracellular-facing. Residues 726–746 (SVGFLVAFAHNILLSISTFVC) traverse the membrane as a helical segment. Residues 747-762 (SYLGKELPENYNEAKC) lie on the Cytoplasmic side of the membrane. Residues 763-783 (VTFSLLLHFVSWIAFFTMSSI) form a helical membrane-spanning segment. Over 784–789 (YQGSYL) the chain is Extracellular. A helical membrane pass occupies residues 790–810 (PAVNVLAGLATLSGGFSGYFL). Over 811–842 (PKCYVILCRPELNNTEHFQASIQDYTRRCGTT) the chain is Cytoplasmic.

It belongs to the G-protein coupled receptor 3 family. TAS1R subfamily. As to quaternary structure, forms heterodimers with TAS1R3. Expressed strongly only in fungiform papillae.

It is found in the cell membrane. Putative taste receptor. TAS1R1/TAS1R3 responds to the umami taste stimulus (the taste of monosodium glutamate) and also to most of the 20 standard L-amino acids, but not to their D-enantiomers or other compounds. Sequence differences within and between species can significantly influence the selectivity and specificity of taste responses. This chain is Taste receptor type 1 member 1 (Tas1r1), found in Mus musculus (Mouse).